A 202-amino-acid chain; its full sequence is T-cell surface glycoprotein CD3 epsilon chain (202 aa).

The N-terminal stretch at 1–21 is a signal peptide; the sequence is MQSRNLWRILGLCLLSVGAWG. The Extracellular segment spans residues 22–122; that stretch reads QDEDFKASDD…VCANCIEVNL (101 aa). The 71-residue stretch at 37–107 folds into the Ig-like domain; the sequence is PEKRFKVSIS…ADSIKEKSYL (71 aa). Cysteines 54 and 96 form a disulfide. A helical membrane pass occupies residues 123 to 143; the sequence is MAVVTIIVADICLTLGLLLMV. Topologically, residues 144 to 202 are cytoplasmic; it reads YYWSKTRKANAKPVMRGTGAGSRPRGQNKEKPPPVPNPDYEPIRKGQQDLYSGLNQRGI. The disordered stretch occupies residues 156–202; the sequence is PVMRGTGAGSRPRGQNKEKPPPVPNPDYEPIRKGQQDLYSGLNQRGI. The tract at residues 170 to 187 is NUMB-binding region; the sequence is QNKEKPPPVPNPDYEPIR. The 28-residue stretch at 173–200 folds into the ITAM domain; sequence EKPPPVPNPDYEPIRKGQQDLYSGLNQR. Positions 174-181 are proline-rich sequence; the sequence is KPPPVPNP. Phosphotyrosine occurs at positions 183 and 194. Residues 192–202 show a composition bias toward polar residues; that stretch reads DLYSGLNQRGI.

As to quaternary structure, the TCR-CD3 complex is composed of a CD3D/CD3E and a CD3G/CD3E heterodimers that preferentially associate with TCRalpha and TCRbeta, respectively, to form TCRalpha/CD3E/CD3G and TCRbeta/CD3G/CD3E trimers. In turn, the hexamer interacts with CD3Z homodimer to form the TCR-CD3 complex. Alternatively, TCRalpha and TCRbeta can be replaced by TCRgamma and TCRdelta. Interacts with CD6. Interacts (via Proline-rich sequence) with NCK1; the interaction is ligand dependent but independent of tyrosine kinase activation. Phosphorylated on Tyr residues after T-cell receptor triggering by LCK in association with CD4/CD8.

The protein localises to the cell membrane. In terms of biological role, part of the TCR-CD3 complex present on T-lymphocyte cell surface that plays an essential role in adaptive immune response. When antigen presenting cells (APCs) activate T-cell receptor (TCR), TCR-mediated signals are transmitted across the cell membrane by the CD3 chains CD3D, CD3E, CD3G and CD3Z. All CD3 chains contain immunoreceptor tyrosine-based activation motifs (ITAMs) in their cytoplasmic domain. Upon TCR engagement, these motifs become phosphorylated by Src family protein tyrosine kinases LCK and FYN, resulting in the activation of downstream signaling pathways. In addition of this role of signal transduction in T-cell activation, CD3E plays an essential role in correct T-cell development. Also participates in internalization and cell surface down-regulation of TCR-CD3 complexes via endocytosis sequences present in CD3E cytosolic region. In addition to its role as a TCR coreceptor, it serves as a receptor for ITPRIPL1. Ligand recognition inhibits T-cell activation by promoting interaction with NCK1, which prevents CD3E-ZAP70 interaction and blocks the ERK-NFkB signaling cascade and calcium influx. The sequence is that of T-cell surface glycoprotein CD3 epsilon chain (CD3E) from Canis lupus familiaris (Dog).